Here is a 334-residue protein sequence, read N- to C-terminus: HTH-type transcriptional regulator RegA (334 aa).

Residues 1-57 form the HTH lacI-type domain; sequence MAASIKDVAREARVSIATVSRVLNNVDVVNEETKKKVMEAIKKLDYRPNIVARSLKT. Positions 5 to 24 form a DNA-binding region, H-T-H motif; sequence IKDVAREARVSIATVSRVLN.

Its function is as follows. Involved in the regulation of amylase production. This Clostridium acetobutylicum (strain ATCC 824 / DSM 792 / JCM 1419 / IAM 19013 / LMG 5710 / NBRC 13948 / NRRL B-527 / VKM B-1787 / 2291 / W) protein is HTH-type transcriptional regulator RegA (regA).